The chain runs to 694 residues: Elongation factor G (694 aa).

The tr-type G domain maps to 10–285 (EKTRNIGIMA…GVVDYLPSPL (276 aa)). Residues 19–26 (AHIDAGKT), 83–87 (DTPGH), and 137–140 (NKMD) contribute to the GTP site.

The protein belongs to the TRAFAC class translation factor GTPase superfamily. Classic translation factor GTPase family. EF-G/EF-2 subfamily.

The protein resides in the cytoplasm. Its function is as follows. Catalyzes the GTP-dependent ribosomal translocation step during translation elongation. During this step, the ribosome changes from the pre-translocational (PRE) to the post-translocational (POST) state as the newly formed A-site-bound peptidyl-tRNA and P-site-bound deacylated tRNA move to the P and E sites, respectively. Catalyzes the coordinated movement of the two tRNA molecules, the mRNA and conformational changes in the ribosome. This chain is Elongation factor G, found in Lactobacillus delbrueckii subsp. bulgaricus (strain ATCC BAA-365 / Lb-18).